A 316-amino-acid polypeptide reads, in one-letter code: Olfactory receptor 2AG1 (316 aa).

Residues Met1–Glu25 are Extracellular-facing. 2 N-linked (GlcNAc...) asparagine glycosylation sites follow: Asn5 and Asn19. A helical membrane pass occupies residues Leu26–Ile49. Residues Thr50–Met57 lie on the Cytoplasmic side of the membrane. The chain crosses the membrane as a helical span at residues Pro58 to Pro79. At Lys80–Gln100 the chain is on the extracellular side. Cys97 and Cys189 are joined by a disulfide. The helical transmembrane segment at Met101–Tyr120 threads the bilayer. At Asp121–Arg139 the chain is on the cytoplasmic side. Residues Ala140–Ile158 form a helical membrane-spanning segment. Topologically, residues Tyr159 to Tyr195 are extracellular. A helical membrane pass occupies residues Glu196–Thr219. Residues Gln220–Lys236 are Cytoplasmic-facing. Residues Ala237–Tyr259 traverse the membrane as a helical segment. Topologically, residues Val260–Asn272 are extracellular. The helical transmembrane segment at Ile273–Leu292 threads the bilayer. Topologically, residues Arg293–Leu316 are cytoplasmic.

This sequence belongs to the G-protein coupled receptor 1 family.

The protein localises to the cell membrane. Functionally, odorant receptor. This chain is Olfactory receptor 2AG1 (OR2AG1), found in Homo sapiens (Human).